Here is a 206-residue protein sequence, read N- to C-terminus: Octanoyltransferase (206 aa).

The BPL/LPL catalytic domain maps to 30–206 (PETNDEIWLV…EFVTLLNNSI (177 aa)). Substrate contacts are provided by residues 69–76 (RGGQVTYH), 137–139 (SLG), and 150–152 (GIA). The active-site Acyl-thioester intermediate is the Cys-168.

The protein belongs to the LipB family.

Its subcellular location is the cytoplasm. The catalysed reaction is octanoyl-[ACP] + L-lysyl-[protein] = N(6)-octanoyl-L-lysyl-[protein] + holo-[ACP] + H(+). Its pathway is protein modification; protein lipoylation via endogenous pathway; protein N(6)-(lipoyl)lysine from octanoyl-[acyl-carrier-protein]: step 1/2. Its function is as follows. Catalyzes the transfer of endogenously produced octanoic acid from octanoyl-acyl-carrier-protein onto the lipoyl domains of lipoate-dependent enzymes. Lipoyl-ACP can also act as a substrate although octanoyl-ACP is likely to be the physiological substrate. In Francisella tularensis subsp. mediasiatica (strain FSC147), this protein is Octanoyltransferase.